The sequence spans 572 residues: Linalool synthase TPS2, chloroplastic (572 aa).

The transit peptide at 1–27 (EVEEPKTKISASTAEASSSRISSAKMT) directs the protein to the chloroplast. The tract at residues 1–45 (EVEEPKTKISASTAEASSSRISSAKMTADGTIKLGDQSPLKQSEK) is disordered. The span at 8–28 (KISASTAEASSSRISSAKMTA) shows a compositional bias: low complexity. Residues Arg284, Asp321, Asp325, Arg462, and Asn465 each coordinate (2E)-geranyl diphosphate. The Mg(2+) site is built by Asp321 and Asp325. The DDXXD motif signature appears at 321-325 (DDVYD). The Mg(2+) site is built by Asn465, Thr469, and Ser473.

It belongs to the terpene synthase family. Tpsb subfamily. In terms of assembly, monomer. Mg(2+) serves as cofactor. It depends on Mn(2+) as a cofactor. In terms of tissue distribution, expressed in flowers and fruits.

The protein resides in the plastid. Its subcellular location is the chloroplast. It catalyses the reaction (2E)-geranyl diphosphate = beta-myrcene + diphosphate. It carries out the reaction (2E)-geranyl diphosphate + H2O = linalool + diphosphate. The catalysed reaction is (2E)-geranyl diphosphate = (Z)-beta-ocimene + diphosphate. The enzyme catalyses (2E)-geranyl diphosphate = (E)-beta-ocimene + diphosphate. Its pathway is secondary metabolite biosynthesis; terpenoid biosynthesis. Its function is as follows. Monoterpene synthase (mono-TPS) involved in the biosynthesis of monoterpenes natural products, constituent of coffee beverage aroma. Catalyzes the conversion of (2E)-geranyl diphosphate (GPP) into linalool and beta-myrcene, and, as minor products, cis-ocimene and trans-ocimene. Not able to use geranylgeranyl pyrophosphate (GGPP) and farnesyl pyrophosphate (FPP) as substrates. The sequence is that of Linalool synthase TPS2, chloroplastic from Coffea arabica (Arabian coffee).